Reading from the N-terminus, the 207-residue chain is ATP-dependent Clp protease proteolytic subunit (207 aa).

The Nucleophile role is filled by Ser111. His136 is a catalytic residue.

Belongs to the peptidase S14 family. In terms of assembly, fourteen ClpP subunits assemble into 2 heptameric rings which stack back to back to give a disk-like structure with a central cavity, resembling the structure of eukaryotic proteasomes.

It is found in the cytoplasm. It carries out the reaction Hydrolysis of proteins to small peptides in the presence of ATP and magnesium. alpha-casein is the usual test substrate. In the absence of ATP, only oligopeptides shorter than five residues are hydrolyzed (such as succinyl-Leu-Tyr-|-NHMec, and Leu-Tyr-Leu-|-Tyr-Trp, in which cleavage of the -Tyr-|-Leu- and -Tyr-|-Trp bonds also occurs).. In terms of biological role, cleaves peptides in various proteins in a process that requires ATP hydrolysis. Has a chymotrypsin-like activity. Plays a major role in the degradation of misfolded proteins. The sequence is that of ATP-dependent Clp protease proteolytic subunit from Pectobacterium atrosepticum (strain SCRI 1043 / ATCC BAA-672) (Erwinia carotovora subsp. atroseptica).